A 136-amino-acid polypeptide reads, in one-letter code: Protein BUNDLE SHEATH DEFECTIVE 2, chloroplastic (136 aa).

A chloroplast-targeting transit peptide spans 1-56; sequence MANSLCFFSSPPTFCFQSPSKNPKPSHFFSTNDNTSSLVQKRELLQTSRSQSFEVK. A CR-type zinc finger spans residues 62-133; the sequence is PQGTKPNSLV…AGFIGGFLST (72 aa). Zn(2+) is bound by residues cysteine 72, cysteine 75, glutamate 78, cysteine 80, cysteine 83, cysteine 86, cysteine 107, cysteine 110, glutamate 115, cysteine 118, and cysteine 121.

It belongs to the BSD2 chaperone family. Interacts with the RuBisCo large subunit (RbcL) assembled as an intermediate complex made of eight RbcL and eight BSD2 subunits.

It is found in the plastid. The protein resides in the chloroplast stroma. In terms of biological role, chloroplast chaperone required for RuBisCo biogenesis and translational regulation of the RuBisCo large subunit (RbcL). Stabilizes an end-state assembly intermediate of eight RbcL subunits until the small subunits (RBCSs) become available to produce a complete stable RuBisCo complex containing eight small and eight large subunits. This chain is Protein BUNDLE SHEATH DEFECTIVE 2, chloroplastic, found in Arabidopsis thaliana (Mouse-ear cress).